Consider the following 835-residue polypeptide: Protein translocase subunit SecA (835 aa).

ATP-binding positions include Gln85, 103-107, and Asp492; that span reads GEGKT. Zn(2+) is bound by residues Cys819, Cys821, Cys830, and Cys831.

Belongs to the SecA family. In terms of assembly, monomer and homodimer. Part of the essential Sec protein translocation apparatus which comprises SecA, SecYEG and auxiliary proteins SecDF. Other proteins may also be involved. Zn(2+) is required as a cofactor.

The protein resides in the cell membrane. The protein localises to the cytoplasm. It catalyses the reaction ATP + H2O + cellular proteinSide 1 = ADP + phosphate + cellular proteinSide 2.. Part of the Sec protein translocase complex. Interacts with the SecYEG preprotein conducting channel. Has a central role in coupling the hydrolysis of ATP to the transfer of proteins into and across the cell membrane, serving as an ATP-driven molecular motor driving the stepwise translocation of polypeptide chains across the membrane. In Clostridium botulinum (strain ATCC 19397 / Type A), this protein is Protein translocase subunit SecA.